The sequence spans 217 residues: Homologous-pairing protein 2 homolog (217 aa).

Residues 89–117 (LDASIMALTAKVQGLQQSCRHMEAELKEL) are interaction with NR3C1, homodimerization and transcriptional activation almost abolished when missing. Residues 93 to 153 (IMALTAKVQG…LKNIKAATNH (61 aa)) are a coiled coil. The DNA-binding stretch occupies residues 118–182 (TSALTTPEMQ…WRKRKRMTTE (65 aa)). The interaction with NR3C1 decreased when missing stretch occupies residues 118–182 (TSALTTPEMQ…WRKRKRMTTE (65 aa)).

This sequence belongs to the HOP2 family. Forms a stable heterodimer with MND1. Interacts with PSMC3/TBP1. Interacts with the DNA-binding domain of the nuclear receptors NR3C1/GR, ESR2/ER-beta, THRB and RXRA. In terms of processing, phosphorylated by PKA, PKC and MAPK.

It is found in the nucleus. Its function is as follows. Plays an important role in meiotic recombination. Stimulates DMC1-mediated strand exchange required for pairing homologous chromosomes during meiosis. The complex PSMC3IP/MND1 binds DNA, stimulates the recombinase activity of DMC1 as well as DMC1 D-loop formation from double-strand DNA. This complex stabilizes presynaptic RAD51 and DMC1 filaments formed on single strand DNA to capture double-strand DNA. This complex stimulates both synaptic and presynaptic critical steps in RAD51 and DMC1-promoted homologous pairing. May inhibit HIV-1 viral protein TAT activity and modulate the activity of proteasomes through association with PSMC3. Plays a role as a coactivator in nuclear receptor-mediated transcription. This Rattus norvegicus (Rat) protein is Homologous-pairing protein 2 homolog (Psmc3ip).